The primary structure comprises 830 residues: Lon protease 3 (830 aa).

The Lon N-terminal domain occupies 19 to 213 (VPLLPLRDII…RLIELMQAEI (195 aa)). 367–374 (GPPGVGKT) is an ATP binding site. In terms of domain architecture, Lon proteolytic spans 604 to 784 (RDEVGLVNGL…DDVLREALIL (181 aa)). Catalysis depends on residues Ser690 and Lys733. The segment covering 811–823 (PVKAPPAAAGEPT) has biased composition (low complexity). Residues 811–830 (PVKAPPAAAGEPTPAAPPGA) form a disordered region.

Belongs to the peptidase S16 family. As to quaternary structure, homohexamer. Organized in a ring with a central cavity.

It is found in the cytoplasm. The enzyme catalyses Hydrolysis of proteins in presence of ATP.. Its function is as follows. ATP-dependent serine protease that mediates the selective degradation of mutant and abnormal proteins as well as certain short-lived regulatory proteins. Required for cellular homeostasis and for survival from DNA damage and developmental changes induced by stress. Degrades polypeptides processively to yield small peptide fragments that are 5 to 10 amino acids long. Binds to DNA in a double-stranded, site-specific manner. This is Lon protease 3 from Sorangium cellulosum (strain So ce56) (Polyangium cellulosum (strain So ce56)).